The chain runs to 178 residues: Large ribosomal subunit protein uL6 (178 aa).

Belongs to the universal ribosomal protein uL6 family. Part of the 50S ribosomal subunit.

Its function is as follows. This protein binds to the 23S rRNA, and is important in its secondary structure. It is located near the subunit interface in the base of the L7/L12 stalk, and near the tRNA binding site of the peptidyltransferase center. This is Large ribosomal subunit protein uL6 from Natranaerobius thermophilus (strain ATCC BAA-1301 / DSM 18059 / JW/NM-WN-LF).